A 489-amino-acid chain; its full sequence is Rhamnulokinase (489 aa).

13–17 (ASSGR) is an ATP binding site. Cysteines 68 and 222 form a disulfide. Substrate contacts are provided by residues Gly-83 and 236–238 (HDT). Asp-237 serves as the catalytic Proton acceptor. ATP is bound at residue Thr-259. Asn-296 provides a ligand contact to substrate. Gln-304 contributes to the ATP binding site. Cys-353 and Cys-370 are oxidised to a cystine. Gly-402 lines the ATP pocket. A disulfide bond links Cys-413 and Cys-417.

The protein belongs to the rhamnulokinase family. Monomer. It depends on Mg(2+) as a cofactor.

The catalysed reaction is L-rhamnulose + ATP = L-rhamnulose 1-phosphate + ADP + H(+). It functions in the pathway carbohydrate degradation; L-rhamnose degradation; glycerone phosphate from L-rhamnose: step 2/3. Functionally, involved in the catabolism of L-rhamnose (6-deoxy-L-mannose). Catalyzes the transfer of the gamma-phosphate group from ATP to the 1-hydroxyl group of L-rhamnulose to yield L-rhamnulose 1-phosphate. This chain is Rhamnulokinase, found in Escherichia coli (strain 55989 / EAEC).